The following is a 484-amino-acid chain: NADH-ubiquinone oxidoreductase chain 4 (484 aa).

The next 14 membrane-spanning stretches (helical) occupy residues 1-21 (MLTLLLIIPLVGALMLAPMQG), 33-53 (LALGTSLINFVLSIVLWGEFD), 77-97 (VDGISLYFVLLTTFITPICIL), 109-129 (YFLMCFLVLETLLIAVFVVLD), 130-150 (ILLFYVFFESVLIPLFLIVGI), 162-182 (FLLFLYTLFGSLFMLLAFLVI), 206-226 (LLWLAVFISMAIKTPLLPFHV), 236-256 (PLAGSVILAGLILKLATYGYM), 270-290 (FSPLVQTIAVITLIYASLATL), 295-315 (FKALVAYSSIGHMAVVVLGLF), 326-346 (LLLSIAHGVVSPALFILVGGV), 365-385 (YMPLFSIMFFVFTIFNAAVPL), 405-425 (VFAVLGSTGIVLSAAYSIWLY), and 448-468 (FMLLLPLLFVAVVFGIFPNII).

This sequence belongs to the complex I subunit 4 family.

It localises to the mitochondrion inner membrane. The catalysed reaction is a ubiquinone + NADH + 5 H(+)(in) = a ubiquinol + NAD(+) + 4 H(+)(out). In terms of biological role, core subunit of the mitochondrial membrane respiratory chain NADH dehydrogenase (Complex I) that is believed to belong to the minimal assembly required for catalysis. Complex I functions in the transfer of electrons from NADH to the respiratory chain. The immediate electron acceptor for the enzyme is believed to be ubiquinone. This is NADH-ubiquinone oxidoreductase chain 4 (ND4) from Mycosarcoma maydis (Corn smut fungus).